The primary structure comprises 214 residues: Probable transaldolase (214 aa).

Lys83 acts as the Schiff-base intermediate with substrate in catalysis.

The protein belongs to the transaldolase family. Type 3B subfamily.

It is found in the cytoplasm. It carries out the reaction D-sedoheptulose 7-phosphate + D-glyceraldehyde 3-phosphate = D-erythrose 4-phosphate + beta-D-fructose 6-phosphate. It participates in carbohydrate degradation; pentose phosphate pathway; D-glyceraldehyde 3-phosphate and beta-D-fructose 6-phosphate from D-ribose 5-phosphate and D-xylulose 5-phosphate (non-oxidative stage): step 2/3. Functionally, transaldolase is important for the balance of metabolites in the pentose-phosphate pathway. This Desulfatibacillum aliphaticivorans protein is Probable transaldolase.